A 360-amino-acid polypeptide reads, in one-letter code: Vomilenine reductase (360 aa).

An Enoyl reductase (ER) domain is found at 23-351 (GLLSPFNFSR…KADVKYRFVI (329 aa)). Cys-50 is a Zn(2+) binding site. Ser-52 serves as a coordination point for an alcohol. Ser-52 is an NADP(+) binding site. Zn(2+)-binding residues include Asp-53, His-72, Glu-73, Cys-103, Cys-106, Cys-109, Cys-117, and Cys-166. His-72 contacts an alcohol. NADP(+)-binding residues include Leu-192, Gly-194, Leu-195, Ser-214, Thr-215, Ser-216, Lys-219, Lys-220, Val-277, Ala-279, Ser-301, and Arg-348.

It belongs to the zinc-containing alcohol dehydrogenase family. Class-P subfamily. In terms of assembly, homodimer. Zn(2+) serves as cofactor. In terms of tissue distribution, confined to roots.

The protein localises to the cytoplasm. The catalysed reaction is (2R)-1,2-dihydrovomilenine + NADP(+) = vomilenine + NADPH + H(+). Its pathway is alkaloid biosynthesis; ajmaline biosynthesis. Its activity is regulated as follows. Inhibited by EDTA and p-hydroxymercuribenzoate, a sulfhydryl reagent. Its function is as follows. Alcohol dehydrogenase involved in the biosynthesis of ajmaline-type monoterpenoid indole alkaloids (MIAs) natural products, important plant-derived pharmaceuticals used in the therapy of heart disorders. Catalyzes the conversion of vomilenine to 1,2-dihydrovomilenine, an intermediate chemical in the biosynthesis of ajmaline. In Rauvolfia serpentina (Serpentine wood), this protein is Vomilenine reductase.